We begin with the raw amino-acid sequence, 518 residues long: Motile sperm domain-containing protein 2 (518 aa).

The Cytoplasmic portion of the chain corresponds to 1–496 (MAENHAQNKA…QVQRCIWFQQ (496 aa)). The region spanning 82-239 (ESSIPRWLLE…HMGGTDPFKY (158 aa)) is the CRAL-TRIO domain. The disordered stretch occupies residues 252–308 (PLCENGPITSEDETSSKEDIESDGKETLETISNEEQTPLLKKINPTESTSKAEENEK). Residues 265–279 (TSSKEDIESDGKETL) show a composition bias toward basic and acidic residues. The 119-residue stretch at 327–445 (LLHISPAEEL…MEHRLRCHTV (119 aa)) folds into the MSP domain. The tract at residues 365–366 (RT) is required for FFAT motif binding and phosphorylated FFAT motif binding. A helical; Anchor for type IV membrane protein membrane pass occupies residues 497–518 (LLLSLTMLLLAFVTSFFYLLYS).

Homooligomer. Interacts (via MSP domain) with STARD3NL (via FFAT motif), RMDN3 (via FFAT motif), OSBPL1A (via FFAT motif) and CERT1 (via FFAT motif). Interacts (via MSP domain) with STARD3 (via phosphorylated FFAT motif); this interaction depends on the critical phosphorylation of STARD3 on 'Ser-209'. Interacts with RB1CC1 (via phosphorylated FFAT motif), MIGA2 (via phosphorylated FFAT motif) and OSBPL1A (via FFAT motif). In terms of tissue distribution, highly expressed in CD14(+) monocytes, and at lower levels in neutrophils. Does not show significant expression in B-cells or T-cells.

It localises to the endoplasmic reticulum membrane. Its function is as follows. Endoplasmic reticulum-anchored protein that mediates the formation of contact sites between the endoplasmic (ER) and endosomes, mitochondria or Golgi through interaction with conventional- and phosphorylated-FFAT-containing organelle-bound proteins. In addition, forms endoplasmic reticulum (ER)-lipid droplets (LDs) contacts through a direct protein-membrane interaction and participates in LDs homeostasis. The attachment mechanism involves an amphipathic helix that has an affinity for lipid packing defects present at the surface of LDs. Promotes migration of primary monocytes and neutrophils, in response to various chemokines. This Homo sapiens (Human) protein is Motile sperm domain-containing protein 2.